The primary structure comprises 165 residues: UPF0303 protein BMA1246 (165 aa).

Belongs to the UPF0303 family.

This is UPF0303 protein BMA1246 from Burkholderia mallei (strain ATCC 23344).